Here is a 338-residue protein sequence, read N- to C-terminus: UDP-3-O-acylglucosamine N-acyltransferase (338 aa).

H239 acts as the Proton acceptor in catalysis.

Belongs to the transferase hexapeptide repeat family. LpxD subfamily. As to quaternary structure, homotrimer.

It carries out the reaction a UDP-3-O-[(3R)-3-hydroxyacyl]-alpha-D-glucosamine + a (3R)-hydroxyacyl-[ACP] = a UDP-2-N,3-O-bis[(3R)-3-hydroxyacyl]-alpha-D-glucosamine + holo-[ACP] + H(+). It functions in the pathway bacterial outer membrane biogenesis; LPS lipid A biosynthesis. In terms of biological role, catalyzes the N-acylation of UDP-3-O-acylglucosamine using 3-hydroxyacyl-ACP as the acyl donor. Is involved in the biosynthesis of lipid A, a phosphorylated glycolipid that anchors the lipopolysaccharide to the outer membrane of the cell. This chain is UDP-3-O-acylglucosamine N-acyltransferase, found in Xylella fastidiosa (strain M23).